A 264-amino-acid chain; its full sequence is Large ribosomal subunit protein mL50 (264 aa).

A mitochondrion-targeting transit peptide spans 1–75 (MSSLLKLHCI…EEGTNEASSQ (75 aa)).

This sequence belongs to the mitochondrion-specific ribosomal protein mL50 family. As to quaternary structure, component of the mitochondrial large ribosomal subunit (mt-LSU). Mature yeast 74S mitochondrial ribosomes consist of a small (37S) and a large (54S) subunit. The 37S small subunit contains a 15S ribosomal RNA (15S mt-rRNA) and 34 different proteins. The 54S large subunit contains a 21S rRNA (21S mt-rRNA) and 46 different proteins.

The protein localises to the mitochondrion. Its function is as follows. Component of the mitochondrial ribosome (mitoribosome), a dedicated translation machinery responsible for the synthesis of mitochondrial genome-encoded proteins, including at least some of the essential transmembrane subunits of the mitochondrial respiratory chain. The mitoribosomes are attached to the mitochondrial inner membrane and translation products are cotranslationally integrated into the membrane. This Saccharomyces cerevisiae (strain ATCC 204508 / S288c) (Baker's yeast) protein is Large ribosomal subunit protein mL50 (MRPL13).